The following is a 329-amino-acid chain: Glyceraldehyde-3-phosphate dehydrogenase 1 (329 aa).

Residues 11–12, aspartate 33, and lysine 78 each bind NAD(+); that span reads RI. Residues 148–150, threonine 179, 208–209, and arginine 231 contribute to the D-glyceraldehyde 3-phosphate site; these read SCT and TG. The active-site Nucleophile is the cysteine 149. Asparagine 313 serves as a coordination point for NAD(+).

Belongs to the glyceraldehyde-3-phosphate dehydrogenase family. Homotetramer.

The protein localises to the cytoplasm. It catalyses the reaction D-glyceraldehyde 3-phosphate + phosphate + NAD(+) = (2R)-3-phospho-glyceroyl phosphate + NADH + H(+). It participates in carbohydrate degradation; glycolysis; pyruvate from D-glyceraldehyde 3-phosphate: step 1/5. In Kluyveromyces lactis (strain ATCC 8585 / CBS 2359 / DSM 70799 / NBRC 1267 / NRRL Y-1140 / WM37) (Yeast), this protein is Glyceraldehyde-3-phosphate dehydrogenase 1 (GAP1).